Here is a 198-residue protein sequence, read N- to C-terminus: Glycerol-3-phosphate acyltransferase (198 aa).

A run of 5 helical transmembrane segments spans residues 2-22, 48-70, 75-97, 111-131, and 154-174; these read YAVLTAIIAYLIGCINNAYIF, LGYKAAAPVFALDVLKGVIAVLI, MGNTGAMIAGIAVVCGHNWPVFL, VVMTVSPLLGLIALAIGVTVI, and IFWNSTQIFIFSLILASLAIF.

Belongs to the PlsY family. As to quaternary structure, probably interacts with PlsX.

Its subcellular location is the cell membrane. The catalysed reaction is an acyl phosphate + sn-glycerol 3-phosphate = a 1-acyl-sn-glycero-3-phosphate + phosphate. It functions in the pathway lipid metabolism; phospholipid metabolism. Its function is as follows. Catalyzes the transfer of an acyl group from acyl-phosphate (acyl-PO(4)) to glycerol-3-phosphate (G3P) to form lysophosphatidic acid (LPA). This enzyme utilizes acyl-phosphate as fatty acyl donor, but not acyl-CoA or acyl-ACP. This is Glycerol-3-phosphate acyltransferase from Thermoanaerobacter sp. (strain X514).